The sequence spans 279 residues: Tryptophan synthase alpha chain (279 aa).

Active-site proton acceptor residues include E50 and D61.

The protein belongs to the TrpA family. As to quaternary structure, tetramer of two alpha and two beta chains.

The enzyme catalyses (1S,2R)-1-C-(indol-3-yl)glycerol 3-phosphate + L-serine = D-glyceraldehyde 3-phosphate + L-tryptophan + H2O. It functions in the pathway amino-acid biosynthesis; L-tryptophan biosynthesis; L-tryptophan from chorismate: step 5/5. Functionally, the alpha subunit is responsible for the aldol cleavage of indoleglycerol phosphate to indole and glyceraldehyde 3-phosphate. The sequence is that of Tryptophan synthase alpha chain from Rhizobium rhizogenes (strain K84 / ATCC BAA-868) (Agrobacterium radiobacter).